Here is a 482-residue protein sequence, read N- to C-terminus: Glucose starvation modulator protein 1 (482 aa).

The segment at residues 20 to 48 is a DNA-binding region (zn(2)-C6 fungal-type); the sequence is CVFCHEKHLQCDVGRPCQNCEKRNIGESC. The PAS domain occupies 350–422; sequence LLEYENMSKM…KLFNEYLAFS (73 aa).

The protein belongs to the ERT1/acuK family.

The protein resides in the nucleus. In terms of biological role, transcription factor which regulates nonfermentable carbon utilization. The sequence is that of Glucose starvation modulator protein 1 (GSM1) from Eremothecium gossypii (strain ATCC 10895 / CBS 109.51 / FGSC 9923 / NRRL Y-1056) (Yeast).